Reading from the N-terminus, the 456-residue chain is Ezy-1 protein (456 aa).

A signal peptide spans 1–28 (MQLSSSLRSARSAAASSGCALASRPVVA). 3 disordered regions span residues 167–189 (SDGG…DGDG), 273–310 (FTGK…GGSG), and 414–456 (QPAG…SPNM). Residues 281–293 (AEGDDGEDEEEGE) show a composition bias toward acidic residues. Basic and acidic residues predominate over residues 418-428 (DGHEPEPKRPE).

The sequence is that of Ezy-1 protein (Ezy-1) from Chlamydomonas reinhardtii (Chlamydomonas smithii).